Consider the following 108-residue polypeptide: uncharacterized protein (108 aa).

3 helical membrane passes run 24-44 (LWITLVLTLFFTIVEIVGGLL), 55-75 (AHMASDVLALGLSMIALYLAM), and 88-108 (RFEIITSFLNGLTLAIISIGI).

To cation A.eutrophus efflux system protein CzcD.

The protein resides in the cell membrane. This is an uncharacterized protein from Geobacillus stearothermophilus (Bacillus stearothermophilus).